A 495-amino-acid chain; its full sequence is GTPase Der (495 aa).

2 consecutive EngA-type G domains span residues 3-166 (PVIA…MDAE) and 208-381 (IKLA…DCST). Residues 9–16 (GRPNVGKS), 56–60 (DTGGI), 118–121 (NKTD), 214–221 (GRPNVGKS), 261–265 (DTAGV), and 326–329 (NKWD) each bind GTP. One can recognise a KH-like domain in the interval 382–466 (KRVGTSLLTR…PIRIQFKEGE (85 aa)).

This sequence belongs to the TRAFAC class TrmE-Era-EngA-EngB-Septin-like GTPase superfamily. EngA (Der) GTPase family. Associates with the 50S ribosomal subunit.

Its function is as follows. GTPase that plays an essential role in the late steps of ribosome biogenesis. This Yersinia pseudotuberculosis serotype IB (strain PB1/+) protein is GTPase Der.